The chain runs to 533 residues: Protein translocase subunit SecD (533 aa).

The next 6 membrane-spanning stretches (helical) occupy residues 8 to 28, 377 to 397, 400 to 420, 422 to 442, 469 to 489, and 495 to 515; these read ALLV…TFVS, IVGG…GGVV, LALA…GFTL, LPGI…NVLI, LTIL…LQFG, and GFAV…IFVT.

This sequence belongs to the SecD/SecF family. SecD subfamily. In terms of assembly, forms a complex with SecF. Part of the essential Sec protein translocation apparatus which comprises SecA, SecYEG and auxiliary proteins SecDF-YajC and YidC.

Its subcellular location is the cell inner membrane. Functionally, part of the Sec protein translocase complex. Interacts with the SecYEG preprotein conducting channel. SecDF uses the proton motive force (PMF) to complete protein translocation after the ATP-dependent function of SecA. The sequence is that of Protein translocase subunit SecD from Syntrophobacter fumaroxidans (strain DSM 10017 / MPOB).